Consider the following 228-residue polypeptide: L-ribulose-5-phosphate 4-epimerase UlaF (228 aa).

Substrate contacts are provided by residues 26–27 (GN), 43–44 (SG), and 72–73 (SS). Zn(2+) is bound by residues aspartate 74, histidine 93, and histidine 95. The Proton donor/acceptor role is filled by aspartate 118. Residue histidine 167 participates in Zn(2+) binding. Tyrosine 225 acts as the Proton donor/acceptor in catalysis.

Belongs to the aldolase class II family. AraD/FucA subfamily. Requires Zn(2+) as cofactor.

It carries out the reaction L-ribulose 5-phosphate = D-xylulose 5-phosphate. It functions in the pathway cofactor degradation; L-ascorbate degradation; D-xylulose 5-phosphate from L-ascorbate: step 4/4. Its function is as follows. Catalyzes the isomerization of L-ribulose 5-phosphate to D-xylulose 5-phosphate. Is involved in the anaerobic L-ascorbate utilization. The chain is L-ribulose-5-phosphate 4-epimerase UlaF from Escherichia coli O139:H28 (strain E24377A / ETEC).